Here is a 325-residue protein sequence, read N- to C-terminus: Alpha-cuprenene synthase COP6 (325 aa).

5 residues coordinate Mg(2+): D102, E166, N224, S228, and E232.

The protein belongs to the trichodiene synthase family. Requires Mg(2+) as cofactor.

In terms of biological role, alpha-cuprenene synthase; part of the gene cluster that mediates the biosynthesis of alpha-cuprenene and oxidized derivatives. The alpha-cuprenene synthase COP6 is the only sesquiterpene synthase identified in C.cinereus that appears to be part of a biosynthetic gene cluster and is highly specific since it catalyzes the cyclization of (2E,6E)-farnesyl diphosphate into only one product, alpha-cuprenene. COP6 is also able to perform the cyclization of geranyl diphosphate. The cytochrome P450 monooxygenase COX2 then oxidizes the cyclohexadiene ring of alpha-cuprenene at positions 1 and 4, yielding first alpha-cuparene, followed by alpha-cuparophenol and a further yet unidentified compound resulting from one additional oxidation step. The cytochrome P450 monooxygenase COX1 then likely catalyzes the oxidation at position 9 of the pentane ring of alpha-cuprenene to give the corresponding hydroxy or ketone derivatives. The sequence is that of Alpha-cuprenene synthase COP6 from Coprinopsis cinerea (strain Okayama-7 / 130 / ATCC MYA-4618 / FGSC 9003) (Inky cap fungus).